Here is an 877-residue protein sequence, read N- to C-terminus: Phosphoenolpyruvate carboxylase (877 aa).

Catalysis depends on residues histidine 137 and lysine 542.

The protein belongs to the PEPCase type 1 family. Mg(2+) is required as a cofactor.

The enzyme catalyses oxaloacetate + phosphate = phosphoenolpyruvate + hydrogencarbonate. Functionally, forms oxaloacetate, a four-carbon dicarboxylic acid source for the tricarboxylic acid cycle. This is Phosphoenolpyruvate carboxylase from Tolumonas auensis (strain DSM 9187 / NBRC 110442 / TA 4).